We begin with the raw amino-acid sequence, 214 residues long: ATP phosphoribosyltransferase (214 aa).

This sequence belongs to the ATP phosphoribosyltransferase family. Short subfamily. Heteromultimer composed of HisG and HisZ subunits.

It localises to the cytoplasm. It carries out the reaction 1-(5-phospho-beta-D-ribosyl)-ATP + diphosphate = 5-phospho-alpha-D-ribose 1-diphosphate + ATP. It functions in the pathway amino-acid biosynthesis; L-histidine biosynthesis; L-histidine from 5-phospho-alpha-D-ribose 1-diphosphate: step 1/9. Catalyzes the condensation of ATP and 5-phosphoribose 1-diphosphate to form N'-(5'-phosphoribosyl)-ATP (PR-ATP). Has a crucial role in the pathway because the rate of histidine biosynthesis seems to be controlled primarily by regulation of HisG enzymatic activity. This chain is ATP phosphoribosyltransferase, found in Marinomonas sp. (strain MWYL1).